Consider the following 91-residue polypeptide: Cell division topological specificity factor (91 aa).

The protein belongs to the MinE family.

Prevents the cell division inhibition by proteins MinC and MinD at internal division sites while permitting inhibition at polar sites. This ensures cell division at the proper site by restricting the formation of a division septum at the midpoint of the long axis of the cell. The chain is Cell division topological specificity factor from Thermoanaerobacter pseudethanolicus (strain ATCC 33223 / 39E) (Clostridium thermohydrosulfuricum).